Reading from the N-terminus, the 153-residue chain is Xanthine-guanine phosphoribosyltransferase (153 aa).

5-phospho-alpha-D-ribose 1-diphosphate contacts are provided by residues 37 to 38 (RG) and 89 to 97 (DDLVDTGNT). Position 90 (Asp-90) interacts with Mg(2+). The guanine site is built by Asp-93 and Ile-136. 2 residues coordinate xanthine: Asp-93 and Ile-136. Residues 93–97 (DTGNT) and 135–136 (WI) each bind GMP.

It belongs to the purine/pyrimidine phosphoribosyltransferase family. XGPT subfamily. As to quaternary structure, homotetramer. Mg(2+) is required as a cofactor.

Its subcellular location is the cell inner membrane. The catalysed reaction is GMP + diphosphate = guanine + 5-phospho-alpha-D-ribose 1-diphosphate. The enzyme catalyses XMP + diphosphate = xanthine + 5-phospho-alpha-D-ribose 1-diphosphate. It catalyses the reaction IMP + diphosphate = hypoxanthine + 5-phospho-alpha-D-ribose 1-diphosphate. It participates in purine metabolism; GMP biosynthesis via salvage pathway; GMP from guanine: step 1/1. Its pathway is purine metabolism; XMP biosynthesis via salvage pathway; XMP from xanthine: step 1/1. In terms of biological role, purine salvage pathway enzyme that catalyzes the transfer of the ribosyl-5-phosphate group from 5-phospho-alpha-D-ribose 1-diphosphate (PRPP) to the N9 position of the 6-oxopurines guanine and xanthine to form the corresponding ribonucleotides GMP (guanosine 5'-monophosphate) and XMP (xanthosine 5'-monophosphate), with the release of PPi. To a lesser extent, also acts on hypoxanthine. This is Xanthine-guanine phosphoribosyltransferase from Pasteurella multocida (strain Pm70).